The primary structure comprises 350 residues: Ion-translocating oxidoreductase complex subunit D (350 aa).

The next 5 membrane-spanning stretches (helical) occupy residues 15 to 35, 36 to 56, 67 to 87, 88 to 108, and 122 to 142; these read QTQTLMLLVILACLPGLLAQT, WFFGWGSFIQILLALVTALGA, PIKPALMDGSAALTAVLIGLS, LPPLLPWWMLVLGTAFAIIIA, and PAMVAYVLLLVSFPVQMTSWL. Thr186 carries the post-translational modification FMN phosphoryl threonine. A run of 4 helical transmembrane segments spans residues 213-233, 242-262, 264-284, and 299-316; these read WGGIGWSWVNLGYLLGGLFLL, IPGAILGSLLLAATLGYLMTP, ATATPMFHLFSGATMLGAFFI, and LVYGVLIGVLVYLIRRFG.

The protein belongs to the NqrB/RnfD family. As to quaternary structure, the complex is composed of six subunits: RnfA, RnfB, RnfC, RnfD, RnfE and RnfG. Requires FMN as cofactor.

It localises to the cell inner membrane. Part of a membrane-bound complex that couples electron transfer with translocation of ions across the membrane. The sequence is that of Ion-translocating oxidoreductase complex subunit D from Aeromonas salmonicida (strain A449).